The primary structure comprises 250 residues: Ubiquinone biosynthesis O-methyltransferase (250 aa).

Positions 41, 72, 93, and 136 each coordinate S-adenosyl-L-methionine.

The protein belongs to the methyltransferase superfamily. UbiG/COQ3 family.

The enzyme catalyses a 3-demethylubiquinol + S-adenosyl-L-methionine = a ubiquinol + S-adenosyl-L-homocysteine + H(+). It carries out the reaction a 3-(all-trans-polyprenyl)benzene-1,2-diol + S-adenosyl-L-methionine = a 2-methoxy-6-(all-trans-polyprenyl)phenol + S-adenosyl-L-homocysteine + H(+). The protein operates within cofactor biosynthesis; ubiquinone biosynthesis. Functionally, O-methyltransferase that catalyzes the 2 O-methylation steps in the ubiquinone biosynthetic pathway. In Agrobacterium fabrum (strain C58 / ATCC 33970) (Agrobacterium tumefaciens (strain C58)), this protein is Ubiquinone biosynthesis O-methyltransferase.